Here is a 392-residue protein sequence, read N- to C-terminus: Tryptophan synthase beta chain (392 aa).

Lys86 is subject to N6-(pyridoxal phosphate)lysine.

It belongs to the TrpB family. As to quaternary structure, tetramer of two alpha and two beta chains. The cofactor is pyridoxal 5'-phosphate.

It catalyses the reaction (1S,2R)-1-C-(indol-3-yl)glycerol 3-phosphate + L-serine = D-glyceraldehyde 3-phosphate + L-tryptophan + H2O. The protein operates within amino-acid biosynthesis; L-tryptophan biosynthesis; L-tryptophan from chorismate: step 5/5. Its function is as follows. The beta subunit is responsible for the synthesis of L-tryptophan from indole and L-serine. This is Tryptophan synthase beta chain (trpB) from Buchnera aphidicola subsp. Schlechtendalia chinensis.